A 95-amino-acid chain; its full sequence is Integration host factor subunit beta (95 aa).

Residues 56-76 are disordered; that stretch reads RAPRTGRNPKTGTSVDLDGKY.

Belongs to the bacterial histone-like protein family. In terms of assembly, heterodimer of an alpha and a beta chain.

In terms of biological role, this protein is one of the two subunits of integration host factor, a specific DNA-binding protein that functions in genetic recombination as well as in transcriptional and translational control. The protein is Integration host factor subunit beta of Shewanella sediminis (strain HAW-EB3).